The following is a 777-amino-acid chain: 5-methyltetrahydropteroyltriglutamate--homocysteine methyltransferase (777 aa).

5-methyltetrahydropteroyltri-L-glutamate is bound by residues 17–20 (RELK) and K132. Residues 455–457 (IGS) and E508 each bind L-homocysteine. L-methionine contacts are provided by residues 455–457 (IGS) and E508. Residues 539–540 (RC) and W585 contribute to the 5-methyltetrahydropteroyltri-L-glutamate site. L-homocysteine is bound at residue D623. D623 is a binding site for L-methionine. Residue E629 participates in 5-methyltetrahydropteroyltri-L-glutamate binding. Zn(2+) is bound by residues H665, C667, and E689. Residue H718 is the Proton donor of the active site. C750 serves as a coordination point for Zn(2+).

It belongs to the vitamin-B12 independent methionine synthase family. It depends on Zn(2+) as a cofactor.

The catalysed reaction is 5-methyltetrahydropteroyltri-L-glutamate + L-homocysteine = tetrahydropteroyltri-L-glutamate + L-methionine. The protein operates within amino-acid biosynthesis; L-methionine biosynthesis via de novo pathway; L-methionine from L-homocysteine (MetE route): step 1/1. Catalyzes the transfer of a methyl group from 5-methyltetrahydrofolate to homocysteine resulting in methionine formation. This is 5-methyltetrahydropteroyltriglutamate--homocysteine methyltransferase from Caulobacter vibrioides (strain ATCC 19089 / CIP 103742 / CB 15) (Caulobacter crescentus).